The sequence spans 2590 residues: 5-methylorsellinic acid synthase (2590 aa).

The N-terminal acylcarrier protein transacylase domain (SAT) stretch occupies residues 6–255 (LLCGSQAIQW…HNQVNRELFA (250 aa)). A Ketosynthase family 3 (KS3) domain is found at 369–784 (GDSIAIVGMG…GSNAALIVTQ (416 aa)). Residues cysteine 534, histidine 669, and histidine 707 each act as for beta-ketoacyl synthase activity in the active site. The malonyl-CoA:ACP transacylase (MAT) domain stretch occupies residues 891–1191 (LAFGGQTGNV…HAVNLGGPEP (301 aa)). Serine 978 serves as the catalytic For acyl/malonyl transferase activity. The interval 1263-1393 (PKLVSFVKYL…GTVNISSLTS (131 aa)) is N-terminal hotdog fold. The region spanning 1263–1569 (PKLVSFVKYL…FAKVPTASLK (307 aa)) is the PKS/mFAS DH domain. The product template (PT) domain stretch occupies residues 1267 to 1568 (SFVKYLDSNR…RFAKVPTASL (302 aa)). The Proton acceptor; for dehydratase activity role is filled by histidine 1297. Residues 1421–1569 (TSAIQGSLVY…FAKVPTASLK (149 aa)) are C-terminal hotdog fold. The Proton donor; for dehydratase activity role is filled by aspartate 1481. The disordered stretch occupies residues 1587–1612 (LKVTEPSANVPKAQPVSTYPKPMKPA). 2 consecutive Carrier domains span residues 1617-1691 (AQIR…ASGT) and 1736-1812 (SAQA…IPKP). O-(pantetheine 4'-phosphoryl)serine is present on residues serine 1651 and serine 1772. The methyltransferase (CMeT) domain stretch occupies residues 1980–2212 (QHRGEHKLLN…GFRHVDWSDD (233 aa)). Positions 2282–2590 (LMIHGGGHIM…EGYEFLLRHL (309 aa)) are thioesterase (TE) domain.

It catalyses the reaction 3 malonyl-CoA + acetyl-CoA + S-adenosyl-L-methionine + H(+) = 5-methylorsellinate + S-adenosyl-L-homocysteine + 3 CO2 + 4 CoA. Its pathway is secondary metabolite biosynthesis. In terms of biological role, non-reducing polyketide synthase; part of the cluster A that mediates the biosynthesis of azasperpyranones, members of the azaphilone family that exhibit anti-cancer activities. Azasperpyranones are synthesized by 2 clusters, A and B. Cluster A is responsible for the production of the polyhydric phenol moiety while the azaphilonoid scaffold is produced by the cluster B. The non-reducing polyketide synthase ATEG_03629 produces 5-methyl orsellinic acid, which is then reduced to 5-methyl orsellinic aldehyde by the NRPS-like protein ATEG_03630. 5-methyl orsellinic aldehyde is then first hydroxylated by the FAD-dependent monooxygenase ATEG_03635 and subsequently hydroxylated by the cytochrome P450 monooxygenase ATEG_03631 to produce the unstable polyhydric phenol precursor of azasperpyranones. On the other hand, the polyketide synthase ATEG_07659 is responsible for producing the 3,5-dimethyloctadienone moiety from acetyl-CoA, three malonyl-CoA, and two S-adenosyl methionines (SAM). The 3,5-dimethyloctadienone moiety is then loaded onto the SAT domain of ATEG_07661 and extended with four malonyl-CoA and one SAM, which leads to the formation of 2,4-dihydroxy-6-(5,7-dimethyl-2-oxo-trans-3-trans-5-nonadienyl)-3-methylbenzaldehyde (compound 8) after reductive release and aldol condensation. The FAD-dependent monooxygenase ATEG_07662 is the next enzyme in the biosynthesis sequence and hydroxylates the side chain at the benzylic position of compound 8. In Aspergillus nidulans, afoF, the ortholog of the FAD-dependent oxygenase ATEG_07660, is the key enzyme for the biosynthesis of asperfuranone by catalyzing the hydroxylation at C-8 of to prevent the formation of a six-membered ring hemiacetal intermediate and thus facilitating the formation of a five-membered ring to produce asperfuranone. In Aspergillus terreus, ATEG_07660 is probably not functional, which leads to the formation of the six-membered ring hemiacetal intermediate presperpyranone instead of asperfuranone. Finally, ATEG_03636 is involved in the condensation of the polyhydric phenol moiety produced by cluster A and the perasperpyranone precursor produced by cluster B, to yield azasperpyranone A. Further modifications of azasperpyranone A result in the production of derivatives, including azasperpyranone B to F. The protein is 5-methylorsellinic acid synthase of Aspergillus terreus (strain NIH 2624 / FGSC A1156).